The following is a 491-amino-acid chain: Cytosolic Fe-S cluster assembly factor NAR1 (491 aa).

The [4Fe-4S] cluster site is built by Cys-20, Cys-59, Cys-62, Cys-65, Cys-177, Cys-231, Cys-412, and Cys-416.

Belongs to the NARF family. As to quaternary structure, interacts with CIA1.

It localises to the cytoplasm. It is found in the nucleus. Essential component of a cytosolic Fe/S protein assembly machinery. Required for maturation of extramitochondrial Fe/S proteins. May play a role in the transfer of pre-assembled Fe/S clusters to target apoproteins. The polypeptide is Cytosolic Fe-S cluster assembly factor NAR1 (NAR1) (Saccharomyces cerevisiae (strain ATCC 204508 / S288c) (Baker's yeast)).